Here is a 468-residue protein sequence, read N- to C-terminus: Probable ubiquitin carboxyl-terminal hydrolase R319 (468 aa).

The 421-residue stretch at 42-462 (TGIMNLGNTC…NAYILFYIRS (421 aa)) folds into the USP domain. The active-site Nucleophile is the cysteine 51. Histidine 420 serves as the catalytic Proton acceptor.

This sequence belongs to the peptidase C19 family.

It carries out the reaction Thiol-dependent hydrolysis of ester, thioester, amide, peptide and isopeptide bonds formed by the C-terminal Gly of ubiquitin (a 76-residue protein attached to proteins as an intracellular targeting signal).. In Acanthamoeba polyphaga (Amoeba), this protein is Probable ubiquitin carboxyl-terminal hydrolase R319.